The primary structure comprises 597 residues: U3 small nucleolar RNA-associated protein 6 homolog (597 aa).

5 HAT repeats span residues 121 to 153 (ATKT…WEME), 156 to 188 (LSSE…MELM), 304 to 335 (RKEE…FCLE), 488 to 520 (GGYK…FEKE), and 524 to 557 (CNMA…EELN).

This sequence belongs to the UTP6 family. In terms of assembly, part of the small subunit (SSU) processome, composed of more than 70 proteins and the RNA chaperone small nucleolar RNA (snoRNA) U3.

The protein localises to the nucleus. Its subcellular location is the nucleolus. Part of the small subunit (SSU) processome, first precursor of the small eukaryotic ribosomal subunit. During the assembly of the SSU processome in the nucleolus, many ribosome biogenesis factors, an RNA chaperone and ribosomal proteins associate with the nascent pre-rRNA and work in concert to generate RNA folding, modifications, rearrangements and cleavage as well as targeted degradation of pre-ribosomal RNA by the RNA exosome. Involved in nucleolar processing of pre-18S ribosomal RNA. The protein is U3 small nucleolar RNA-associated protein 6 homolog of Homo sapiens (Human).